Reading from the N-terminus, the 329-residue chain is Glycerol-3-phosphate dehydrogenase [NAD(P)+] (329 aa).

The NADPH site is built by serine 13, tryptophan 14, histidine 34, and lysine 105. Sn-glycerol 3-phosphate-binding residues include lysine 105, glycine 134, and serine 136. Alanine 138 lines the NADPH pocket. Residues lysine 189, aspartate 242, serine 252, arginine 253, and asparagine 254 each contribute to the sn-glycerol 3-phosphate site. Lysine 189 (proton acceptor) is an active-site residue. Residue arginine 253 coordinates NADPH. Residues valine 277 and glutamate 279 each contribute to the NADPH site.

The protein belongs to the NAD-dependent glycerol-3-phosphate dehydrogenase family.

It localises to the cytoplasm. It carries out the reaction sn-glycerol 3-phosphate + NAD(+) = dihydroxyacetone phosphate + NADH + H(+). The enzyme catalyses sn-glycerol 3-phosphate + NADP(+) = dihydroxyacetone phosphate + NADPH + H(+). Its pathway is membrane lipid metabolism; glycerophospholipid metabolism. Catalyzes the reduction of the glycolytic intermediate dihydroxyacetone phosphate (DHAP) to sn-glycerol 3-phosphate (G3P), the key precursor for phospholipid synthesis. This chain is Glycerol-3-phosphate dehydrogenase [NAD(P)+], found in Legionella pneumophila (strain Corby).